Consider the following 286-residue polypeptide: Homeobox-leucine zipper protein ATHB-20 (286 aa).

The homeobox DNA-binding region spans 84–143 (LGEKKKRLQLEQVKALEKSFELGNKLEPERKIQLAKALGMQPRQIAIWFQNRRARWKTRQ). Positions 144 to 179 (LERDYDSLKKQFESLKSDNASLLAYNKKLLAEVMAL) are leucine-zipper.

Belongs to the HD-ZIP homeobox family. Class I subfamily. As to expression, widely expressed.

It is found in the nucleus. In terms of biological role, probable transcription factor. This is Homeobox-leucine zipper protein ATHB-20 (ATHB-20) from Arabidopsis thaliana (Mouse-ear cress).